The sequence spans 280 residues: Phosphatidylglycerol--prolipoprotein diacylglyceryl transferase (280 aa).

4 helical membrane passes run 26–46, 71–91, 106–126, and 132–152; these read LAIH…WFYA, FILW…ILFY, IWNG…AMIL, and GIPV…GLLF. R154 provides a ligand contact to a 1,2-diacyl-sn-glycero-3-phospho-(1'-sn-glycerol). A run of 3 helical transmembrane segments spans residues 193–213, 217–237, and 251–271; these read GLEG…FKAL, GTVT…VEFF, and WLTM…WAVL.

It belongs to the Lgt family.

Its subcellular location is the cell inner membrane. The catalysed reaction is L-cysteinyl-[prolipoprotein] + a 1,2-diacyl-sn-glycero-3-phospho-(1'-sn-glycerol) = an S-1,2-diacyl-sn-glyceryl-L-cysteinyl-[prolipoprotein] + sn-glycerol 1-phosphate + H(+). The protein operates within protein modification; lipoprotein biosynthesis (diacylglyceryl transfer). Its function is as follows. Catalyzes the transfer of the diacylglyceryl group from phosphatidylglycerol to the sulfhydryl group of the N-terminal cysteine of a prolipoprotein, the first step in the formation of mature lipoproteins. This Agrobacterium fabrum (strain C58 / ATCC 33970) (Agrobacterium tumefaciens (strain C58)) protein is Phosphatidylglycerol--prolipoprotein diacylglyceryl transferase.